Reading from the N-terminus, the 207-residue chain is Uridine kinase (207 aa).

Glycine 13–threonine 20 is a binding site for ATP.

It belongs to the uridine kinase family.

Its subcellular location is the cytoplasm. It catalyses the reaction uridine + ATP = UMP + ADP + H(+). The catalysed reaction is cytidine + ATP = CMP + ADP + H(+). The protein operates within pyrimidine metabolism; CTP biosynthesis via salvage pathway; CTP from cytidine: step 1/3. It functions in the pathway pyrimidine metabolism; UMP biosynthesis via salvage pathway; UMP from uridine: step 1/1. This is Uridine kinase from Ureaplasma parvum serovar 3 (strain ATCC 27815 / 27 / NCTC 11736).